The primary structure comprises 98 residues: Co-chaperonin GroES (98 aa).

It belongs to the GroES chaperonin family. In terms of assembly, heptamer of 7 subunits arranged in a ring. Interacts with the chaperonin GroEL.

It localises to the cytoplasm. Its function is as follows. Together with the chaperonin GroEL, plays an essential role in assisting protein folding. The GroEL-GroES system forms a nano-cage that allows encapsulation of the non-native substrate proteins and provides a physical environment optimized to promote and accelerate protein folding. GroES binds to the apical surface of the GroEL ring, thereby capping the opening of the GroEL channel. The polypeptide is Co-chaperonin GroES (Beutenbergia cavernae (strain ATCC BAA-8 / DSM 12333 / CCUG 43141 / JCM 11478 / NBRC 16432 / NCIMB 13614 / HKI 0122)).